The following is a 131-amino-acid chain: Small ribosomal subunit protein eS17A (131 aa).

The protein belongs to the eukaryotic ribosomal protein eS17 family. As to quaternary structure, component of the small ribosomal subunit (SSU). Mature yeast ribosomes consist of a small (40S) and a large (60S) subunit. The 40S small subunit contains 1 molecule of ribosomal RNA (18S rRNA) and at least 33 different proteins. The large 60S subunit contains 3 rRNA molecules (25S, 5.8S and 5S rRNA) and at least 46 different proteins.

It is found in the cytoplasm. Its function is as follows. Component of the ribosome, a large ribonucleoprotein complex responsible for the synthesis of proteins in the cell. The small ribosomal subunit (SSU) binds messenger RNAs (mRNAs) and translates the encoded message by selecting cognate aminoacyl-transfer RNA (tRNA) molecules. The large subunit (LSU) contains the ribosomal catalytic site termed the peptidyl transferase center (PTC), which catalyzes the formation of peptide bonds, thereby polymerizing the amino acids delivered by tRNAs into a polypeptide chain. The nascent polypeptides leave the ribosome through a tunnel in the LSU and interact with protein factors that function in enzymatic processing, targeting, and the membrane insertion of nascent chains at the exit of the ribosomal tunnel. This Schizosaccharomyces pombe (strain 972 / ATCC 24843) (Fission yeast) protein is Small ribosomal subunit protein eS17A (rps1701).